Reading from the N-terminus, the 336-residue chain is Urokinase plasminogen activator surface receptor (336 aa).

A signal peptide spans 1 to 23 (MGHPLLLPLLLLLLHTGVPASWG). 3 consecutive UPAR/Ly6 domains span residues 24-111 (LRCM…VTFP), 116-208 (LECI…LSLA), and 215-302 (HRCY…EDIQ). Intrachain disulfides connect Cys-26/Cys-47, Cys-29/Cys-35, and Cys-40/Cys-68. N-linked (GlcNAc...) asparagine glycosylation occurs at Asn-75. Disulfide bonds link Cys-94/Cys-99, Cys-118/Cys-145, Cys-121/Cys-128, Cys-138/Cys-170, Cys-176/Cys-193, Cys-194/Cys-199, Cys-217/Cys-245, Cys-220/Cys-228, Cys-238/Cys-264, Cys-270/Cys-288, and Cys-289/Cys-294. N-linked (GlcNAc...) asparagine glycans are attached at residues Asn-195 and Asn-223.

Monomer. Interacts (via the UPAR/Ly6 domains) with SRPX2. Interacts with MRC2. Interacts with FAP (seprase); the interaction occurs at the cell surface of invadopodia membrane. Interacts with SORL1 (via N-terminal ectodomain); this interaction decreases PLAUR internalization. The ternary complex composed of PLAUR-PLAU-SERPINE1 also interacts with SORL1.

It localises to the cell membrane. It is found in the cell projection. The protein localises to the invadopodium membrane. Its function is as follows. Acts as a receptor for urokinase plasminogen activator. Plays a role in localizing and promoting plasmin formation. Mediates the proteolysis-independent signal transduction activation effects of U-PA. It is subject to negative-feedback regulation by U-PA which cleaves it into an inactive form. In Aotus trivirgatus (Three-striped night monkey), this protein is Urokinase plasminogen activator surface receptor (PLAUR).